The following is a 349-amino-acid chain: Micronemal protein 6 (349 aa).

Positions 1 to 23 (MRLFRCCAAAVVAAESLLWLKNG) are cleaved as a signal peptide. EGF-like domains are found at residues 36–80 (IADN…VTCM), 96–134 (TPAA…SLDG), and 147–192 (GCEE…ITCK). Intrachain disulfides connect Cys40–Cys53, Cys45–Cys62, Cys64–Cys79, Cys100–Cys113, Cys105–Cys122, Cys124–Cys140, Cys148–Cys162, Cys153–Cys173, and Cys175–Cys191. The interval 194-291 (VPPHYRKPPF…EEGSGHAGAI (98 aa)) is disordered. An acidic domain region spans residues 204–283 (EFGKGGHPVD…SEEQGKEREE (80 aa)). 2 stretches are compositionally biased toward basic and acidic residues: residues 210–247 (HPVD…RTPL) and 276–285 (EQGKEREEGS). A helical transmembrane segment spans residues 290–310 (AIAGGVIGGLLLLSAAGAGVA).

Interacts directly with MIC1. Part of the MIC6-MIC1-MIC4 complex. In terms of processing, subject to proteolytic processing involving both the N-terminus and the C-terminus. The first EGF-like domain (EGF-like domain 1) is removed by proteolytic cleavage by ASP3 and is not present in the mature protein. Released as soluble 35 kDa protein after proteolytic processing at the C-terminus.

It is found in the cytoplasmic vesicle. It localises to the secretory vesicle. The protein resides in the microneme membrane. Its subcellular location is the secreted. Functionally, escorter protein required for import of MIC1 and MIC4 adhesins into the microneme. The chain is Micronemal protein 6 from Toxoplasma gondii.